Reading from the N-terminus, the 146-residue chain is Angiogenin (146 aa).

The first 24 residues, Met-1 to Ala-24, serve as a signal peptide directing secretion. Gln-25 carries the pyrrolidone carboxylic acid modification. His-37 serves as the catalytic Proton acceptor. Intrachain disulfides connect Cys-50-Cys-105, Cys-63-Cys-116, and Cys-81-Cys-131. A Nucleolar localization signal motif is present at residues Arg-55–Met-59. Residues Cys-105 and Ile-127 each contribute to the tRNA site. The Proton donor role is filled by His-138.

The protein belongs to the pancreatic ribonuclease family. As to quaternary structure, homodimer. Interacts with RNH1; inhibiting ANG ribonuclease activity. Interacts with PCNA.

The protein resides in the secreted. The protein localises to the nucleus. Its subcellular location is the nucleolus. It localises to the cytoplasm. It is found in the stress granule. Its activity is regulated as follows. Has weak tRNA ribonuclease activity by itself due to partial autoinhibition by its C-terminus, which folds into a short alpha-helix that partially occludes the substrate-binding site. In absence of stress, the ribonuclease activity is inhibited by RNH1 in the cytoplasm. In response to stress, dissociates from RNH1 in the cytoplasm and associates with cytoplasmic ribosomes with vacant A-sites: ribosomes directly activate the tRNA ribonuclease activity of ANG by refolding the C-terminal alpha-helix. In response to stress, the angiogenic activity of ANG is inhibited by RNH1 in the nucleus. In terms of biological role, secreted ribonuclease that can either promote or restrict cell proliferation of target cells, depending on the context. Endocytosed in target cells via its receptor PLXNB2 and translocates to the cytoplasm or nucleus. Under stress conditions, localizes to the cytoplasm and promotes the assembly of stress granules (SGs): specifically cleaves a subset of tRNAs within anticodon loops to produce tRNA-derived stress-induced fragments (tiRNAs), resulting in translation repression and inhibition of cell proliferation. tiRNas also prevent formation of apoptosome, thereby promoting cell survival. Preferentially cleaves RNAs between a pyrimidine and an adenosine residue, suggesting that it cleaves the anticodon loop of tRNA(Ala) (32-UUAGCAU-38) after positions 33 and 36. Cleaves a subset of tRNAs, including tRNA(Ala), tRNA(Glu), tRNA(Gly), tRNA(Lys), tRNA(Val), tRNA(His), tRNA(Asp) and tRNA(Sec). Under growth conditions and in differentiated cells, translocates to the nucleus and stimulates ribosomal RNA (rRNA) transcription, including that containing the initiation site sequences of 45S rRNA, thereby promoting cell growth and proliferation. Angiogenin induces vascularization of normal and malignant tissues via its ability to promote rRNA transcription. Involved in hematopoietic stem and progenitor cell (HSPC) growth and survival by promoting rRNA transcription in growth conditions and inhibiting translation in response to stress, respectively. Mediates the crosstalk between myeloid and intestinal epithelial cells to protect the intestinal epithelial barrier integrity: secreted by myeloid cells and promotes intestinal epithelial cells proliferation and survival. Also mediates osteoclast-endothelial cell crosstalk in growing bone: produced by osteoclasts and protects the neighboring vascular cells against senescence by promoting rRNA transcription. The protein is Angiogenin (ANG) of Saimiri sciureus (Common squirrel monkey).